We begin with the raw amino-acid sequence, 488 residues long: 3-octaprenyl-4-hydroxybenzoate carboxy-lyase (488 aa).

N172 serves as a coordination point for Mn(2+). Prenylated FMN is bound by residues 175 to 177, 189 to 191, and 194 to 195; these read IYR, RWL, and RG. E238 is a Mn(2+) binding site. D287 serves as the catalytic Proton donor.

Belongs to the UbiD family. Homohexamer. Prenylated FMN serves as cofactor. Mn(2+) is required as a cofactor.

The protein resides in the cell membrane. It catalyses the reaction a 4-hydroxy-3-(all-trans-polyprenyl)benzoate + H(+) = a 2-(all-trans-polyprenyl)phenol + CO2. It functions in the pathway cofactor biosynthesis; ubiquinone biosynthesis. Its function is as follows. Catalyzes the decarboxylation of 3-octaprenyl-4-hydroxy benzoate to 2-octaprenylphenol, an intermediate step in ubiquinone biosynthesis. The chain is 3-octaprenyl-4-hydroxybenzoate carboxy-lyase from Pseudomonas fluorescens (strain ATCC BAA-477 / NRRL B-23932 / Pf-5).